A 157-amino-acid chain; its full sequence is 3-hydroxyacyl-[acyl-carrier-protein] dehydratase FabZ (157 aa).

His58 is a catalytic residue.

The protein belongs to the thioester dehydratase family. FabZ subfamily.

The protein localises to the cytoplasm. The enzyme catalyses a (3R)-hydroxyacyl-[ACP] = a (2E)-enoyl-[ACP] + H2O. Involved in unsaturated fatty acids biosynthesis. Catalyzes the dehydration of short chain beta-hydroxyacyl-ACPs and long chain saturated and unsaturated beta-hydroxyacyl-ACPs. This is 3-hydroxyacyl-[acyl-carrier-protein] dehydratase FabZ from Brucella ovis (strain ATCC 25840 / 63/290 / NCTC 10512).